Reading from the N-terminus, the 146-residue chain is Large ribosomal subunit protein uL15 (146 aa).

The segment at 1-56 (MKLHELKAAEGANKASKRVGRGTGSGLGKTSGRGQNGQNSRSGGGVRPGFEGGQMP) is disordered. 2 stretches are compositionally biased toward gly residues: residues 21–35 (RGTG…GRGQ) and 42–52 (SGGGVRPGFEG).

It belongs to the universal ribosomal protein uL15 family. As to quaternary structure, part of the 50S ribosomal subunit.

In terms of biological role, binds to the 23S rRNA. This is Large ribosomal subunit protein uL15 from Clostridium botulinum (strain ATCC 19397 / Type A).